Here is a 265-residue protein sequence, read N- to C-terminus: Mlc titration factor A (265 aa).

Residues histidine 111, histidine 148, histidine 152, and glutamate 211 each coordinate Zn(2+).

The protein belongs to the MtfA family. As to quaternary structure, interacts with Mlc. It depends on Zn(2+) as a cofactor.

Its subcellular location is the cytoplasm. Functionally, involved in the modulation of the activity of the glucose-phosphotransferase system (glucose-PTS). Interacts with the transcriptional repressor Mlc, preventing its interaction with DNA and leading to the modulation of expression of genes regulated by Mlc, including ptsG, which encodes the PTS system glucose-specific EIICB component. Its function is as follows. Shows zinc-dependent metallopeptidase activity. The polypeptide is Mlc titration factor A (Shigella sonnei (strain Ss046)).